The chain runs to 454 residues: Inactive tetrahydroanabasine acetyltransferase pauper allele (454 aa).

This sequence belongs to the plant acyltransferase family. As to quaternary structure, monomer.

This Lupinus albus (White lupine) protein is Inactive tetrahydroanabasine acetyltransferase pauper allele.